The sequence spans 398 residues: Bone morphogenetic protein 2-B (398 aa).

The N-terminal stretch at 1-23 (MVAGIHSLLLLQFYQILLSGCTG) is a signal peptide. Residues 24–284 (LVPEEGKRKY…GHALHKRQKR (261 aa)) constitute a propeptide that is removed on maturation. N137, N202, N237, and N340 each carry an N-linked (GlcNAc...) asparagine glycan. Intrachain disulfides connect C298/C363, C327/C395, and C331/C397.

Belongs to the TGF-beta family. In terms of assembly, homodimer; disulfide-linked.

It localises to the secreted. In terms of biological role, induces cartilage and bone formation. The polypeptide is Bone morphogenetic protein 2-B (bmp2-b) (Xenopus laevis (African clawed frog)).